Here is a 62-residue protein sequence, read N- to C-terminus: DNA-directed RNA polymerase subunit Rpo10 (62 aa).

Residues Cys-6, Cys-9, Cys-43, and Cys-44 each contribute to the Zn(2+) site.

Belongs to the archaeal Rpo10/eukaryotic RPB10 RNA polymerase subunit family. Part of the RNA polymerase complex. Requires Zn(2+) as cofactor.

Its subcellular location is the cytoplasm. It carries out the reaction RNA(n) + a ribonucleoside 5'-triphosphate = RNA(n+1) + diphosphate. Its function is as follows. DNA-dependent RNA polymerase (RNAP) catalyzes the transcription of DNA into RNA using the four ribonucleoside triphosphates as substrates. This chain is DNA-directed RNA polymerase subunit Rpo10, found in Methanosphaerula palustris (strain ATCC BAA-1556 / DSM 19958 / E1-9c).